We begin with the raw amino-acid sequence, 432 residues long: UPF0761 membrane protein Cag_0935 (432 aa).

The next 6 membrane-spanning stretches (helical) occupy residues 52–72, 108–128, 148–168, 190–210, 220–240, and 254–274; these read LLSIVPVLAVVLSVLNLFEVF, NIPLLGSLLLFVIALSLLSTV, FTLYWTVLTLGPLLIVSSLAA, LLALFPFINSIVAFFLLYMLV, AFAGALVASLLLELSKRWFLF, and ALSVVPMLFFWVYLAWVVVLV.

Belongs to the UPF0761 family.

It is found in the cell inner membrane. The sequence is that of UPF0761 membrane protein Cag_0935 from Chlorobium chlorochromatii (strain CaD3).